A 312-amino-acid polypeptide reads, in one-letter code: Olfactory receptor 867 (312 aa).

Topologically, residues 1 to 6 (MILNCN) are extracellular. The helical transmembrane segment at 7–30 (PFSGLFLSMYLVTVLGNLLIILAV) threads the bilayer. Residues 31 to 38 (SSNSHLHN) are Cytoplasmic-facing. A helical membrane pass occupies residues 39-60 (LMYFFLSNLSFVDICFISTTIP). Topologically, residues 61–81 (KMLVNIHSQTKDISYIECLSQ) are extracellular. Cysteine 78 and cysteine 160 form a disulfide bridge. Residues 82–101 (VYFLTTFGGMDNFLLTLMAC) form a helical membrane-spanning segment. Topologically, residues 102-120 (DRYVAICHPLNYTVIMNLQ) are cytoplasmic. The chain crosses the membrane as a helical span at residues 121 to 139 (LCALLILMFWLIMFCVSLI). Topologically, residues 140–177 (HVLLMNELNFSRGTEIPHFFCELAQVLKVANSDTHINN) are extracellular. The N-linked (GlcNAc...) asparagine glycan is linked to asparagine 148. Residues 178-200 (VFMYVVTSLLGLIPMTGILMSYS) form a helical membrane-spanning segment. Residues 201 to 217 (QIASSLLKMSSSVSKYK) are Cytoplasmic-facing. Residues 218–241 (AFSTCGSHLCVVSLFYGSATIVYF) traverse the membrane as a helical segment. Residues 242–253 (CSSVLHSTHKKM) lie on the Extracellular side of the membrane. A helical transmembrane segment spans residues 254–273 (IASLMYTVISPMLNPFIYSL). At 274-312 (RNKDVKGALGKLFIRVASCPLWSKDFRPKFILKPERQSL) the chain is on the cytoplasmic side.

Belongs to the G-protein coupled receptor 1 family. As to expression, epithelium of the tongue; including the taste buds.

The protein localises to the cell membrane. Functionally, possible olfactory or taste receptor. This is Olfactory receptor 867 (Olr867) from Rattus norvegicus (Rat).